Here is a 371-residue protein sequence, read N- to C-terminus: Maltose/maltodextrin import ATP-binding protein MalK (371 aa).

One can recognise an ABC transporter domain in the interval 4 to 234 (VQLQNVTKAW…PADRFVAGFI (231 aa)). 36-43 (GPSGCGKS) contributes to the ATP binding site.

It belongs to the ABC transporter superfamily. Maltooligosaccharide importer (TC 3.A.1.1.1) family. As to quaternary structure, the complex is composed of two ATP-binding proteins (MalK), two transmembrane proteins (MalG and MalK) and a solute-binding protein (MalE).

The protein resides in the cell inner membrane. The catalysed reaction is D-maltose(out) + ATP + H2O = D-maltose(in) + ADP + phosphate + H(+). In terms of biological role, part of the ABC transporter complex MalEFGK involved in maltose/maltodextrin import. Responsible for energy coupling to the transport system. This Shigella flexneri serotype 5b (strain 8401) protein is Maltose/maltodextrin import ATP-binding protein MalK.